The chain runs to 507 residues: Histidine ammonia-lyase (507 aa).

Residues 141–143 (ASG) constitute a cross-link (5-imidazolinone (Ala-Gly)). Serine 142 carries the 2,3-didehydroalanine (Ser) modification.

It belongs to the PAL/histidase family. In terms of processing, contains an active site 4-methylidene-imidazol-5-one (MIO), which is formed autocatalytically by cyclization and dehydration of residues Ala-Ser-Gly.

The protein localises to the cytoplasm. The catalysed reaction is L-histidine = trans-urocanate + NH4(+). Its pathway is amino-acid degradation; L-histidine degradation into L-glutamate; N-formimidoyl-L-glutamate from L-histidine: step 1/3. The polypeptide is Histidine ammonia-lyase (Burkholderia orbicola (strain MC0-3)).